A 1645-amino-acid chain; its full sequence is MATDGASCEPDFSRAPEDAEGATAEAAKKEFDVDTLSKSELRMLLSVMEGELEARDLVIEALRARRKEVFIQERYGRFNLNDPFLALQRDYEAGAGEKEKKPVCTNPLSILEAVMAHCRKMQERMSTQLAAAESRQKKLEMEKLQLQGLEQEHKQLAARLEEERGKNKHVVLMLVKECKQLSGKVLDEAQKLEDVLARLEEEKKKTGTLEEQLSAEKRKSTEMEAQMEKQLSEFDTEREQLRAKLHREEAHTTDLKEEIDKMKKMIEQLKRGNDSKPSLSLPRKTKDRRSVSISVGTEGPVTRSVACQTDPAVESIDHVKKLPLTVPVKPPTGSPLVSANTKGNVCPSAALGRPGIDRQASHGDLIVSSLPTVPPPSASKIEENGPSTGSPSSTPPLPNSTAPPTVQTPTIAPQSHAQAAPGHSLHSPCANAALHPGLNPRIQAARFRFQGNANDPDQNGNTTQSPPSRDVSPTSRDSLVAKQLARNTVTQALSRFTSPPAGAPPRPGAPSTGDVGTCPPVGRTSLKTPGVARVDRGNPPPIPPKKPGLSQTPSPPHPQLKVIMDSSRASSAGAKVDNKTMASPPSTLPQGNRVINEENLPKSSSPQLPPKPSIDLTVAPAGCGVSALATSQVGAWPAETPGLSQPACSESSLVIPTTIAFCSSINPVSASSCRTGASDSLLVAASGWSPSLTPLLMSGGPAPLAGRPTLLQQAAAQGNVTLLSMLLNEEGLDINYSCEDGHSALYSAAKNGHTDCVRLLLNAEAQVNAADKNGFTPLCAAAAQGHFKCVELLIAYNANINHAADEGQTPLYLACKNGNKECIKHLLEAGTDRSVKTRDGWTPVHAAVDAGNVDSLKLLMYHRAPARRNSLHEEEPESGVFDLDQGEESPEGTSKPVIPADLINHADREGWTAAHIAASKGFKDCLEILCKHRGLEPERRDKCNRTAHDVATDDCKHLLENLNALKIPVRISGGESPPGNYGSDDFECENTICALNIRKQTSWEDFSKAVSQALTNHFQAISSDGWRSLEDGTFNNTTDSCIGLSTSSVRSVMLGNVPWSTGQSFSQSPWDFMKKNKAEQVTVFLSGPQEGCLSSVTYTSMIPLQMLQNYLRLVEQYHNVIFHGPEGSLQDYVAHQLALCMKHRQMAAGFTCEIVRAKVDAGFSKEQLGDLFISSACLIPVKQSPMNKKVIIVLENLEKCSLSELLGDFLAPLENRSTESPWILQKGNGTSECYYFHENCFLMGTIAKACLQGSDLLVQQHFRWVQLRWDGEPMQGLLPRFLRRKVMNKFRGQVPSPCDPVCKTVDWALAVWRQLNSCLARLGTPEALLGPEYFLSCPVVPGHAQATVKWMAKLWNAVIAPRVQEAVLSRASVRRQPGLGLTAARSRPSQGQQAVVKVALSILLNKAVLHGCPLQRADLDQHVADFKGGAFPLSIVSSYNSCSRKKGESGAWRKVSTSPRKKSGRFSPPSWSKPGPSEEGIKVKAISQLNYNRNASLSKQKSLENDLSLTLNLEQRLSLGSDDEADLVQELQSMCSSKSESDISKIADSRDDLRSFDSPGNSPAFSATVNPRMPVSPKEVSPFSSHQPTECSNSQSKMELGVSRVKSFLPVPRSKVTQCSQNTKRSSSSSNTRQIEINNNSKEEI.

Disordered stretches follow at residues 1-28 (MATD…EAAK), 269-293 (LKRG…SVSI), 366-435 (IVSS…AALH), 451-478 (GNAN…SRDS), and 492-612 (ALSR…PPKP). Residues 119 to 276 (RKMQERMSTQ…EQLKRGNDSK (158 aa)) adopt a coiled-coil conformation. Composition is skewed to polar residues over residues 407–417 (QTPTIAPQSHA) and 451–477 (GNAN…TSRD). Arg-495 bears the Asymmetric dimethylarginine mark. The span at 580 to 590 (TMASPPSTLPQ) shows a compositional bias: polar residues. 6 ANK repeats span residues 706–736 (GRPT…DINY), 740–769 (DGHS…QVNA), 773–802 (NGFT…NINH), 806–835 (EGQT…DRSV), 839–868 (DGWT…PARR), and 909–939 (EGWT…EPER). The interval 868-898 (RNSLHEEEPESGVFDLDQGEESPEGTSKPVI) is disordered. The segment at 1442 to 1479 (CSRKKGESGAWRKVSTSPRKKSGRFSPPSWSKPGPSEE) is disordered. Ser-1521 is modified (phosphoserine). The tract at residues 1551–1645 (DDLRSFDSPG…EINNNSKEEI (95 aa)) is disordered. Polar residues-rich tracts occupy residues 1558–1569 (SPGNSPAFSATV) and 1582–1597 (PFSS…SQSK). Residues 1620–1634 (SQNTKRSSSSSNTRQ) show a composition bias toward low complexity. Residues 1635–1645 (IEINNNSKEEI) show a composition bias toward polar residues.

Interacts with CTTN/cortactin SH3 domain. Interacts with STRN, STRN4/zinedin and MOB4/phocein; this interactions mediate the association with the STRIPAK core complex and may regulate dendritic spine distribution of the STRIPAK complex in hippocampal neurons. Activation of glutamate receptors weakens the interaction with STRN and STRN4.

It is found in the cytoplasm. It localises to the cell cortex. The protein resides in the cell projection. The protein localises to the dendritic spine. Regulates the dendritic spine distribution of CTTN/cortactin in hippocampal neurons, and thus controls dendritic spinogenesis and dendritic spine maintenance. Associates with the striatin-interacting phosphatase and kinase (STRIPAK) core complex to regulate dendritic spine distribution of the STRIPAK complex in hippocampal neurons. This is Cortactin-binding protein 2 (CTTNBP2) from Mustela putorius furo (European domestic ferret).